A 208-amino-acid polypeptide reads, in one-letter code: Thymidylate kinase (208 aa).

10–17 serves as a coordination point for ATP; sequence GPDGSGKT.

It belongs to the thymidylate kinase family.

The enzyme catalyses dTMP + ATP = dTDP + ADP. In terms of biological role, phosphorylation of dTMP to form dTDP in both de novo and salvage pathways of dTTP synthesis. This is Thymidylate kinase from Listeria monocytogenes serotype 4b (strain CLIP80459).